We begin with the raw amino-acid sequence, 225 residues long: NAD(P)H-quinone oxidoreductase subunit K, chloroplastic (225 aa).

Residues C43, C44, C108, and C139 each coordinate [4Fe-4S] cluster.

This sequence belongs to the complex I 20 kDa subunit family. NDH is composed of at least 16 different subunits, 5 of which are encoded in the nucleus. [4Fe-4S] cluster is required as a cofactor.

The protein localises to the plastid. It localises to the chloroplast thylakoid membrane. It carries out the reaction a plastoquinone + NADH + (n+1) H(+)(in) = a plastoquinol + NAD(+) + n H(+)(out). It catalyses the reaction a plastoquinone + NADPH + (n+1) H(+)(in) = a plastoquinol + NADP(+) + n H(+)(out). NDH shuttles electrons from NAD(P)H:plastoquinone, via FMN and iron-sulfur (Fe-S) centers, to quinones in the photosynthetic chain and possibly in a chloroplast respiratory chain. The immediate electron acceptor for the enzyme in this species is believed to be plastoquinone. Couples the redox reaction to proton translocation, and thus conserves the redox energy in a proton gradient. This chain is NAD(P)H-quinone oxidoreductase subunit K, chloroplastic, found in Helianthus annuus (Common sunflower).